Reading from the N-terminus, the 251-residue chain is 3-deoxy-manno-octulosonate cytidylyltransferase (251 aa).

This sequence belongs to the KdsB family.

It is found in the cytoplasm. The catalysed reaction is 3-deoxy-alpha-D-manno-oct-2-ulosonate + CTP = CMP-3-deoxy-beta-D-manno-octulosonate + diphosphate. It functions in the pathway nucleotide-sugar biosynthesis; CMP-3-deoxy-D-manno-octulosonate biosynthesis; CMP-3-deoxy-D-manno-octulosonate from 3-deoxy-D-manno-octulosonate and CTP: step 1/1. The protein operates within bacterial outer membrane biogenesis; lipopolysaccharide biosynthesis. In terms of biological role, activates KDO (a required 8-carbon sugar) for incorporation into bacterial lipopolysaccharide in Gram-negative bacteria. The polypeptide is 3-deoxy-manno-octulosonate cytidylyltransferase (Chelativorans sp. (strain BNC1)).